Reading from the N-terminus, the 152-residue chain is Serglycin (152 aa).

The first 25 residues, 1 to 25 (MQVPVGSRLVLALAFVLVWGSSVQG), serve as a signal peptide directing secretion. The propeptide at 26-74 (YPARRARYQWVRCKPNGFFANCIEEKGPQFDLIDESNNIGPPMNNPVLM) is activation peptide. An intrachain disulfide couples Cys-38 to Cys-47. The segment at 66-115 (PPMNNPVLMEGPSKDFISNYDDYGSGSGSGSGSGSGSGSGSGSGFLGDME) is disordered. 10 tandem repeats follow at residues 89-90 (GS), 91-92 (GS), 93-94 (GS), 95-96 (GS), 97-98 (GS), 99-100 (GS), 101-102 (GS), 103-104 (GS), 105-106 (GS), and 107-108 (GS). The 10 X 2 AA tandem repeats of G-S stretch occupies residues 89 to 108 (GSGSGSGSGSGSGSGSGSGS). Positions 90–110 (SGSGSGSGSGSGSGSGSGSGF) are enriched in gly residues. O-linked (Xyl...) (glycosaminoglycan) serine glycosylation is found at Ser-92 and Ser-94. Ser-98, Ser-100, Ser-102, Ser-104, Ser-106, and Ser-108 each carry an O-linked (Xyl...) (glycosaminoglycan) serine glycan.

This sequence belongs to the serglycin family. In terms of assembly, binds to activated CD44 and to GZMB. O-glycosylated; contains chondroitin sulfate and heparan sulfate.

The protein resides in the cytoplasmic granule. It localises to the cytolytic granule. It is found in the secreted. Its subcellular location is the extracellular space. The protein localises to the golgi apparatus. Functionally, plays a role in formation of mast cell secretory granules and mediates storage of various compounds in secretory vesicles. Required for storage of some proteases in both connective tissue and mucosal mast cells and for storage of granzyme B in T-lymphocytes. Plays a role in localizing neutrophil elastase in azurophil granules of neutrophils. Mediates processing of MMP2. Plays a role in cytotoxic cell granule-mediated apoptosis by forming a complex with granzyme B which is delivered to cells by perforin to induce apoptosis. Regulates the secretion of TNF-alpha and may also regulate protease secretion. Inhibits bone mineralization. The protein is Serglycin (Srgn) of Mus musculus (Mouse).